The chain runs to 367 residues: Sulfate/thiosulfate import ATP-binding protein CysA 2 (367 aa).

One can recognise an ABC transporter domain in the interval 3-237; that stretch reads VRVQNIRKEF…PVSPFVYGFI (235 aa). 35–42 contacts ATP; that stretch reads GPSGSGKT.

Belongs to the ABC transporter superfamily. Sulfate/tungstate importer (TC 3.A.1.6) family. In terms of assembly, the complex is composed of two ATP-binding proteins (CysA), two transmembrane proteins (CysT and CysW) and a solute-binding protein (CysP).

The protein resides in the cell inner membrane. The catalysed reaction is sulfate(out) + ATP + H2O = sulfate(in) + ADP + phosphate + H(+). It carries out the reaction thiosulfate(out) + ATP + H2O = thiosulfate(in) + ADP + phosphate + H(+). In terms of biological role, part of the ABC transporter complex CysAWTP involved in sulfate/thiosulfate import. Responsible for energy coupling to the transport system. This Rhizobium meliloti (strain 1021) (Ensifer meliloti) protein is Sulfate/thiosulfate import ATP-binding protein CysA 2.